Reading from the N-terminus, the 455-residue chain is Argininosuccinate lyase (455 aa).

This sequence belongs to the lyase 1 family. Argininosuccinate lyase subfamily.

Its subcellular location is the cytoplasm. The catalysed reaction is 2-(N(omega)-L-arginino)succinate = fumarate + L-arginine. The protein operates within amino-acid biosynthesis; L-arginine biosynthesis; L-arginine from L-ornithine and carbamoyl phosphate: step 3/3. This chain is Argininosuccinate lyase, found in Shewanella baltica (strain OS155 / ATCC BAA-1091).